Here is a 481-residue protein sequence, read N- to C-terminus: 3-ketoacyl-CoA synthase 8 (481 aa).

A run of 2 helical transmembrane segments spans residues 4–24 and 44–64; these read LKMV…AMKG and LQTI…YMLT. An FAE domain is found at 61–358; it reads YMLTRPKPVY…FFITFVKKKY (298 aa). Catalysis depends on residues cysteine 213, histidine 292, histidine 376, histidine 380, histidine 409, and asparagine 413.

This sequence belongs to the thiolase-like superfamily. Chalcone/stilbene synthases family. Expressed in leaves and seedlings.

Its subcellular location is the endoplasmic reticulum membrane. It carries out the reaction a very-long-chain acyl-CoA + malonyl-CoA + H(+) = a very-long-chain 3-oxoacyl-CoA + CO2 + CoA. It participates in lipid metabolism; fatty acid biosynthesis. This Arabidopsis thaliana (Mouse-ear cress) protein is 3-ketoacyl-CoA synthase 8.